Reading from the N-terminus, the 289-residue chain is 33 kDa chaperonin (289 aa).

Intrachain disulfides connect C237–C239 and C270–C273.

This sequence belongs to the HSP33 family. In terms of processing, under oxidizing conditions two disulfide bonds are formed involving the reactive cysteines. Under reducing conditions zinc is bound to the reactive cysteines and the protein is inactive.

Its subcellular location is the cytoplasm. Functionally, redox regulated molecular chaperone. Protects both thermally unfolding and oxidatively damaged proteins from irreversible aggregation. Plays an important role in the bacterial defense system toward oxidative stress. The polypeptide is 33 kDa chaperonin (Oceanobacillus iheyensis (strain DSM 14371 / CIP 107618 / JCM 11309 / KCTC 3954 / HTE831)).